Here is a 494-residue protein sequence, read N- to C-terminus: Alpha-amylase-related protein (494 aa).

Positions 1-20 are cleaved as a signal peptide; that stretch reads MFKFASAVILCVVAASSTLA. Gln-21 carries the post-translational modification Pyrrolidone carboxylic acid. Cys-48 and Cys-104 are joined by a disulfide. Positions 118, 169, and 178 each coordinate Ca(2+). A disulfide bond links Cys-157 and Cys-171. Arg-206 contacts chloride. Asp-208 acts as the Nucleophile in catalysis. His-212 provides a ligand contact to Ca(2+). The active-site Proton donor is the Glu-245. Chloride contacts are provided by Asn-308 and Arg-343. Disulfide bonds link Cys-376/Cys-382, Cys-418/Cys-441, and Cys-448/Cys-460.

This sequence belongs to the glycosyl hydrolase 13 family. As to quaternary structure, monomer. It depends on Ca(2+) as a cofactor. Requires chloride as cofactor.

The protein localises to the secreted. The enzyme catalyses Endohydrolysis of (1-&gt;4)-alpha-D-glucosidic linkages in polysaccharides containing three or more (1-&gt;4)-alpha-linked D-glucose units.. The chain is Alpha-amylase-related protein (Amyrel) from Drosophila varians (Fruit fly).